The following is a 635-amino-acid chain: 1-deoxy-D-xylulose-5-phosphate synthase (635 aa).

Residues H78 and 119 to 121 (GHA) contribute to the thiamine diphosphate site. Position 150 (D150) interacts with Mg(2+). Residues 151–152 (GS), N179, F291, and E376 contribute to the thiamine diphosphate site. N179 contacts Mg(2+).

The protein belongs to the transketolase family. DXPS subfamily. In terms of assembly, homodimer. Requires Mg(2+) as cofactor. Thiamine diphosphate is required as a cofactor.

The catalysed reaction is D-glyceraldehyde 3-phosphate + pyruvate + H(+) = 1-deoxy-D-xylulose 5-phosphate + CO2. The protein operates within metabolic intermediate biosynthesis; 1-deoxy-D-xylulose 5-phosphate biosynthesis; 1-deoxy-D-xylulose 5-phosphate from D-glyceraldehyde 3-phosphate and pyruvate: step 1/1. In terms of biological role, catalyzes the acyloin condensation reaction between C atoms 2 and 3 of pyruvate and glyceraldehyde 3-phosphate to yield 1-deoxy-D-xylulose-5-phosphate (DXP). This is 1-deoxy-D-xylulose-5-phosphate synthase from Chlorobaculum tepidum (strain ATCC 49652 / DSM 12025 / NBRC 103806 / TLS) (Chlorobium tepidum).